The following is a 522-amino-acid chain: Target of rapamycin complex 2 subunit MAPKAP1 (522 aa).

Position 2 is an N-acetylalanine (alanine 2). The interaction with MAP3K2 stretch occupies residues 2–184; sequence AFLDNPTIIL…KKIDVYLPLH (183 aa). Residues 2–267 form an interaction with NBN region; that stretch reads AFLDNPTIIL…GFSTLALVEK (266 aa). The disordered stretch occupies residues 38 to 59; that stretch reads LEKTHPPSVPGDSGSEVQGSSG. At threonine 86 the chain carries Phosphothreonine; by PKB/AKT1 and RPS6KB1. Serine 128 carries the phosphoserine; by PKC modification. Residues 139–267 form the CRIM domain; that stretch reads QSILSVRLEQ…GFSTLALVEK (129 aa). Residues serine 186, serine 315, and serine 356 each carry the phosphoserine modification. An SIN1-type RBD region spans residues 279 to 353; that stretch reads LFVRINAAHG…QNAWEFCLVR (75 aa). Positions 382-487 constitute an SIN1-type PH domain; that stretch reads HYKSFKVSMI…IVLKVNYILE (106 aa). Arginine 393 lines the a 1,2-diacyl-sn-glycero-3-phospho-(1D-myo-inositol-3,4,5-trisphosphate) pocket. Position 398 is a phosphothreonine; by RPS6KB1 (threonine 398). A 1,2-diacyl-sn-glycero-3-phospho-(1D-myo-inositol-3,4,5-trisphosphate) is bound by residues lysine 428 and lysine 464. Positions 468–522 are interaction with ATF2; sequence FESDAATVSEIVLKVNYILESRASTARADYLAQKQRKLNRRTSFSFQKEKKSGQQ. Serine 510 carries the phosphoserine modification.

It belongs to the SIN1 family. As to quaternary structure, component of the mechanistic target of rapamycin complex 2 (mTORC2), consisting in two heterotretramers composed of MTOR, MLST8, RICTOR and MAPKAP1/SIN1. The mTORC2 core complex associates with PRR5/PROTOR1 and/or PRR5L/PROTOR2. Contrary to mTORC1, mTORC2 does not bind to and is not sensitive to FKBP12-rapamycin. Interacts with MAP3K2. Interacts with ATF2. Interacts with MAPK8. Interacts with GTP-bound HRAS and KRAS; inhibiting their activity. Interacts with IFNAR2. Phosphorylation at Ser-128 by PKC promotes relocalization to the perinuclear region, where the mTORC2 complex specifically mediates phosphorylation of SGK1. Phosphorylated at Thr-86 by AKT1 or RPS6KB1 in the presence of growth factors; the effect of this phosphorylation is however unclear. According to two studies, phosphorylation at Thr-86 by AKT1 is part of a positive feedback loop that increases mTORC2 activation. According to another study, phosphorylation at Thr-86 and Thr-398 by RPS6KB1 promotes dissociation from the mTORC2 complex, leading to inhibit mTORC2 signaling. Uniquitously expressed, with highest levels in testis, kidney and liver. Present in renal tubule cells (at protein level).

It is found in the cell membrane. The protein resides in the endoplasmic reticulum membrane. Its subcellular location is the early endosome membrane. It localises to the late endosome membrane. The protein localises to the lysosome membrane. It is found in the golgi apparatus membrane. The protein resides in the mitochondrion outer membrane. Its subcellular location is the cytoplasm. It localises to the perinuclear region. The protein localises to the nucleus. Its activity is regulated as follows. Phosphatidylinositol 3,4,5-trisphosphate (PI(3,4,5)P3) promotes MTOR activation by relieving MAPKAP1/SIN1-mediated inhibition of MTOR that takes place in absence of PI(3,4,5)P3. In terms of biological role, component of the mechanistic target of rapamycin complex 2 (mTORC2), which transduces signals from growth factors to pathways involved in proliferation, cytoskeletal organization, lipogenesis and anabolic output. In response to growth factors, mTORC2 phosphorylates and activates AGC protein kinase family members, including AKT (AKT1, AKT2 and AKT3), PKC (PRKCA, PRKCB and PRKCE) and SGK1. In contrast to mTORC1, mTORC2 is nutrient-insensitive. Within the mTORC2 complex, MAPKAP1/SIN1 acts as a substrate adapter which recognizes and binds AGC protein kinase family members for phosphorylation by MTOR. mTORC2 plays a critical role in AKT1 activation by mediating phosphorylation of different sites depending on the context, such as 'Thr-450', 'Ser-473', 'Ser-477' or 'Thr-479', facilitating the phosphorylation of the activation loop of AKT1 on 'Thr-308' by PDPK1/PDK1 which is a prerequisite for full activation. mTORC2 catalyzes the phosphorylation of SGK1 at 'Ser-422' and of PRKCA on 'Ser-657'. The mTORC2 complex also phosphorylates various proteins involved in insulin signaling, such as FBXW8 and IGF2BP1. mTORC2 acts upstream of Rho GTPases to regulate the actin cytoskeleton, probably by activating one or more Rho-type guanine nucleotide exchange factors. mTORC2 promotes the serum-induced formation of stress-fibers or F-actin. MAPKAP1 inhibits MAP3K2 by preventing its dimerization and autophosphorylation. Inhibits HRAS and KRAS independently of mTORC2 complex. Enhances osmotic stress-induced phosphorylation of ATF2 and ATF2-mediated transcription. Involved in ciliogenesis, regulates cilia length through its interaction with CCDC28B independently of mTORC2 complex. The polypeptide is Target of rapamycin complex 2 subunit MAPKAP1 (Mus musculus (Mouse)).